We begin with the raw amino-acid sequence, 272 residues long: Nitrogenase iron protein (272 aa).

8–15 is an ATP binding site; that stretch reads GKGGIGKS. Residue Cys94 coordinates [4Fe-4S] cluster. Arg97 carries the ADP-ribosylarginine; by dinitrogenase reductase ADP-ribosyltransferase modification. Cys129 is a binding site for [4Fe-4S] cluster.

The protein belongs to the NifH/BchL/ChlL family. As to quaternary structure, homodimer. The cofactor is [4Fe-4S] cluster. Post-translationally, the reversible ADP-ribosylation of Arg-97 inactivates the nitrogenase reductase and regulates nitrogenase activity.

It catalyses the reaction N2 + 8 reduced [2Fe-2S]-[ferredoxin] + 16 ATP + 16 H2O = H2 + 8 oxidized [2Fe-2S]-[ferredoxin] + 2 NH4(+) + 16 ADP + 16 phosphate + 6 H(+). Functionally, the key enzymatic reactions in nitrogen fixation are catalyzed by the nitrogenase complex, which has 2 components: the iron protein and the molybdenum-iron protein. The sequence is that of Nitrogenase iron protein from Clostridium acetobutylicum (strain ATCC 824 / DSM 792 / JCM 1419 / IAM 19013 / LMG 5710 / NBRC 13948 / NRRL B-527 / VKM B-1787 / 2291 / W).